We begin with the raw amino-acid sequence, 412 residues long: MAIASSIGLVAEAIHRHKTPERPIESENDIARYPAEDEQWALDELQDELCQEEPSDSEDQPKKKIRNPAKLADDFLKRYPPPPSGSAPAGRLPLPVIIPQRRPGVRVRGFVRAYAPDLQACGIDQDTFMDFLVTMTRAGRAPQWMGAANLTAAAAFALPGHAIGCGVGFAIQVVNAIAMEMRGRVQANGFLQKLNQGFFQPRGLYCLVLSFDNTHEEAMTDESLATAIATTTDPKTGVRKYTDKLRSHSGTTGPSEFPESAPLVFPVLDWLETNANAEQAEKLGRYKKFRKFVADYYDRRAQAEYAARNPTSPLAAPPRRGFTSKLADPNDDTNKSPISLATGGLVPYNTTWRETRNSEGRRPPRKIADKVLYMIIVNMPSDDDMSRAESIMATEATTEPSVQSDDAEAAKG.

Disordered regions lie at residues 1 to 66 (MAIA…KKIR), 308 to 342 (RNPT…SLAT), and 386 to 412 (SRAE…AAKG). Residues 36-58 (EDEQWALDELQDELCQEEPSDSE) show a composition bias toward acidic residues. Polar residues predominate over residues 395–404 (EATTEPSVQS).

The protein operates within mycotoxin biosynthesis. Part of the gene cluster that mediates the biosynthesis of burnettramic acids, an unusual class of bolaamphiphilic pyrrolizidinediones that display potent antibacterial, antifungal, and cytotoxic activities. The first step of the biosynthesis of burnettramic acids is the hydroxylation of proline by the proline hydroxylase buaE to generate 4-hydroxyproline. The PKS-NRPS buaA and trans-enoyl reductase buaC construct the highly reduced polyketide chain, and the condensation (C) domain of buaA then catalyzes the amide bond formation with the activated 4-hydroxyproline. This is followed by the R domain releasing the nascent polyketide-peptide directly via a Dieckmann condensation to afford a tetramic acid fused to the hydroxyproline, generating the bicyclic pyrrolidinedione moiety. The cytochrome P450 monooxygenases buaD and buaG are likely responsible for the multiple hydroxylations on the polyketide chain and its terminus, although in the heterologous context, buaD does not appear to be required. Therefore, while buaG may be a multifunctional cytochrome P450 monooxygenase, it cannot be ruled out that the two secondary alcohols on the polyketide chain could have an acetate origin. Finally, the glycosyltransferase buaB transfers beta-D-mannose to the aglycone burnettramic acid A to form burnettramic acid A. Burnettramic acid B is a minor cis-pyrrolizidine epimer of burnettramic acid A and it is likely that small amounts of it form naturally in acidic environments. The role of the uncharacterized protein buaF in the biosynthesis of burnettramic acids has still to be determined. This is Burnettramic acids biosynthesis cluster protein E from Petromyces alliaceus (Aspergillus alliaceus).